We begin with the raw amino-acid sequence, 276 residues long: Eukaryotic translation initiation factor 3 subunit G-2 (276 aa).

The RRM domain occupies 196-274 (SAVRISNLSE…LILCVEWSKP (79 aa)).

Belongs to the eIF-3 subunit G family. In terms of assembly, component of the eukaryotic translation initiation factor 3 (eIF-3) complex. The eIF-3 complex interacts with pix.

Its subcellular location is the cytoplasm. In terms of biological role, RNA-binding component of the eukaryotic translation initiation factor 3 (eIF-3) complex, which is involved in protein synthesis of a specialized repertoire of mRNAs and, together with other initiation factors, stimulates binding of mRNA and methionyl-tRNAi to the 40S ribosome. The eIF-3 complex specifically targets and initiates translation of a subset of mRNAs involved in cell proliferation. This subunit can bind 18S rRNA. The polypeptide is Eukaryotic translation initiation factor 3 subunit G-2 (Drosophila persimilis (Fruit fly)).